The primary structure comprises 289 residues: ATP synthase gamma chain (289 aa).

The protein belongs to the ATPase gamma chain family. As to quaternary structure, F-type ATPases have 2 components, CF(1) - the catalytic core - and CF(0) - the membrane proton channel. CF(1) has five subunits: alpha(3), beta(3), gamma(1), delta(1), epsilon(1). CF(0) has three main subunits: a, b and c.

It is found in the cell inner membrane. Functionally, produces ATP from ADP in the presence of a proton gradient across the membrane. The gamma chain is believed to be important in regulating ATPase activity and the flow of protons through the CF(0) complex. The polypeptide is ATP synthase gamma chain (Nitrosococcus oceani (strain ATCC 19707 / BCRC 17464 / JCM 30415 / NCIMB 11848 / C-107)).